A 104-amino-acid chain; its full sequence is Integration host factor subunit alpha (104 aa).

The protein belongs to the bacterial histone-like protein family. In terms of assembly, heterodimer of an alpha and a beta chain.

Functionally, this protein is one of the two subunits of integration host factor, a specific DNA-binding protein that functions in genetic recombination as well as in transcriptional and translational control. The protein is Integration host factor subunit alpha of Buchnera aphidicola subsp. Cinara cedri (strain Cc).